The primary structure comprises 151 residues: Abdominal ganglion neuropeptide L11 (151 aa).

The N-terminal stretch at 1–25 (MPCTPNSHRLLLVTALCLLITSLFA) is a signal peptide.

The protein localises to the secreted. This Aplysia californica (California sea hare) protein is Abdominal ganglion neuropeptide L11.